A 264-amino-acid polypeptide reads, in one-letter code: Phosphonates import ATP-binding protein PhnC (264 aa).

The 248-residue stretch at 7 to 254 folds into the ABC transporter domain; that stretch reads LSIRAASKTF…KLIDIYGPEF (248 aa). 39–46 lines the ATP pocket; that stretch reads GPSGSGKS.

The protein belongs to the ABC transporter superfamily. Phosphonates importer (TC 3.A.1.9.1) family. The complex is composed of two ATP-binding proteins (PhnC), two transmembrane proteins (PhnE) and a solute-binding protein (PhnD).

Its subcellular location is the cell inner membrane. It catalyses the reaction phosphonate(out) + ATP + H2O = phosphonate(in) + ADP + phosphate + H(+). Functionally, part of the ABC transporter complex PhnCDE involved in phosphonates import. Responsible for energy coupling to the transport system. In Caulobacter vibrioides (strain ATCC 19089 / CIP 103742 / CB 15) (Caulobacter crescentus), this protein is Phosphonates import ATP-binding protein PhnC.